The primary structure comprises 463 residues: Cysteine--tRNA ligase (463 aa).

Cys33 contributes to the Zn(2+) binding site. The 'HIGH' region signature appears at 35–45 (PTVYDFAHIGN). Zn(2+)-binding residues include Cys221, His246, and Glu250. Positions 279–283 (KMSKS) match the 'KMSKS' region motif. Lys282 provides a ligand contact to ATP.

Belongs to the class-I aminoacyl-tRNA synthetase family. Monomer. Requires Zn(2+) as cofactor.

Its subcellular location is the cytoplasm. It carries out the reaction tRNA(Cys) + L-cysteine + ATP = L-cysteinyl-tRNA(Cys) + AMP + diphosphate. This Rhizobium rhizogenes (strain K84 / ATCC BAA-868) (Agrobacterium radiobacter) protein is Cysteine--tRNA ligase.